The sequence spans 727 residues: Bromodomain-containing protein C631.02 (727 aa).

Disordered regions lie at residues 27–231 and 341–369; these read AATI…PPMT and TSYSRPGRRPRSMTAPKGGARTRRQAAMY. Acidic residues predominate over residues 56–68; that stretch reads ENDDGTLDLFGDS. Basic and acidic residues predominate over residues 69 to 78; it reads ELEKEQKGDN. Polar residues predominate over residues 102-114; it reads PSSPTHPSVSNIT. Basic and acidic residues predominate over residues 128-150; the sequence is EEEKSSESLDSHTHPPKRVRNED. Residues 153–177 are compositionally biased toward polar residues; sequence LTFSKTSPVSPSSLKDGASNTVTND. Position 162 is a phosphoserine (S162). Over residues 206–231 the composition is skewed to basic and acidic residues; sequence SKEHSSPHDETVKKEENDKDQYPPMT. In terms of domain architecture, Bromo 1 spans 229-335; sequence PMTKEQHKYI…ATFERQLKQL (107 aa). The region spanning 388 to 497 is the Bromo 2 domain; that stretch reads RKDAAEMKFC…SIFQKLWANK (110 aa). The region spanning 570–650 is the NET domain; the sequence is RSLSVDIYPP…KGDEIGAEAL (81 aa). The segment at 699–727 is disordered; that stretch reads IAAYNTKSLGSDDSSSEDDGESSESSDSA. Over residues 712–727 the composition is skewed to acidic residues; the sequence is SSSEDDGESSESSDSA.

It belongs to the BET family.

It localises to the nucleus. The sequence is that of Bromodomain-containing protein C631.02 from Schizosaccharomyces pombe (strain 972 / ATCC 24843) (Fission yeast).